We begin with the raw amino-acid sequence, 191 residues long: Cell number regulator 1 (191 aa).

Residues 13-44 (FSAGAPPTAPPPPAAYHQQQQQHGANMDTSRP) are disordered. Residues 27 to 37 (AYHQQQQQHGA) show a composition bias toward low complexity. A helical membrane pass occupies residues 91–113 (IASGLVYGLICASTGMGCLYSCL).

Belongs to the cornifelin family. As to expression, expressed in roots, coleoptiles, stalks and silks. Detected in leaves, apical meristems, immature ears and pericarps. Highest expression in coleoptiles and silks.

It is found in the membrane. In terms of biological role, acts as a negative regulator of cell number. This chain is Cell number regulator 1 (CNR1), found in Zea mays (Maize).